The chain runs to 443 residues: Probable glycine dehydrogenase (decarboxylating) subunit 1 (443 aa).

This sequence belongs to the GcvP family. N-terminal subunit subfamily. As to quaternary structure, the glycine cleavage system is composed of four proteins: P, T, L and H. In this organism, the P 'protein' is a heterodimer of two subunits.

It catalyses the reaction N(6)-[(R)-lipoyl]-L-lysyl-[glycine-cleavage complex H protein] + glycine + H(+) = N(6)-[(R)-S(8)-aminomethyldihydrolipoyl]-L-lysyl-[glycine-cleavage complex H protein] + CO2. Its function is as follows. The glycine cleavage system catalyzes the degradation of glycine. The P protein binds the alpha-amino group of glycine through its pyridoxal phosphate cofactor; CO(2) is released and the remaining methylamine moiety is then transferred to the lipoamide cofactor of the H protein. In Maridesulfovibrio salexigens (strain ATCC 14822 / DSM 2638 / NCIMB 8403 / VKM B-1763) (Desulfovibrio salexigens), this protein is Probable glycine dehydrogenase (decarboxylating) subunit 1.